A 1114-amino-acid polypeptide reads, in one-letter code: Kinesin-like protein KIN-12F (1114 aa).

The interval 1-84 (MADNRIAGSL…RSQVSASRPR (84 aa)) is disordered. 2 stretches are compositionally biased toward polar residues: residues 10 to 39 (LPTSSKWSFLPKSVSSHFKPSSNPRSSNPD) and 48 to 80 (PNIHNPRNQSVSSKSTAYKNQMDSPNCRSQVSA). One can recognise a Kinesin motor domain in the interval 104–436 (HVKVVVRIKP…LRFGERAKAM (333 aa)). 175–182 (GQNGSGKT) is a binding site for ATP. 3 coiled-coil regions span residues 761-791 (QQELEKLCSEQAAKIEQLTRLVGQHKLQTED), 872-942 (ARSF…LRRA), and 1038-1081 (EVLV…HKLE). Residues 1092-1114 (NTLPESALQPLHQRNSAIEEEGM) form a disordered region.

Belongs to the TRAFAC class myosin-kinesin ATPase superfamily. Kinesin family. KIN-12 subfamily.

The chain is Kinesin-like protein KIN-12F from Arabidopsis thaliana (Mouse-ear cress).